A 351-amino-acid chain; its full sequence is MVLSIRSQIIIGVVSSILLTSTILAIAYILMWFNGHMTLTLTLTTIITSCLTLLICSIFINPLIQKIKQFNIKTKQFANGNYASNDKTFNSPKEIYELNQSFNKMASEITQQMNQIKSEQQEKTELIQNLAHDLKTPLASIISYSEGLRDGIITKDHEIKESYDILIKQANRLSTLFDDMTHIITLNTGKTYPPELIQLDQLLVSILQPYEQRIKHENRTLEVNFCSEIDAFYQYRTPLERILTNLLDNALKFSNVGSRIDINISENKDQDTIDIAISDEGIGIIPELQERIFERTFRVENSRNTKTGGSGLGLYIANELAQQNNAKISVSSDIDVGTTMTVTLHKLDITS.

2 helical membrane-spanning segments follow: residues 9–29 (IIIG…IAYI) and 40–60 (TLTL…SIFI). The HAMP domain maps to 61–114 (NPLIQKIKQFNIKTKQFANGNYASNDKTFNSPKEIYELNQSFNKMASEITQQMN). Residues 129-348 (NLAHDLKTPL…TMTVTLHKLD (220 aa)) enclose the Histidine kinase domain. His-132 carries the post-translational modification Phosphohistidine; by autocatalysis.

Post-translationally, autophosphorylated.

Its subcellular location is the cell membrane. It carries out the reaction ATP + protein L-histidine = ADP + protein N-phospho-L-histidine.. In terms of biological role, member of the two-component regulatory system SaeR/SaeS involved in the regulation of staphylococcal virulence factors in a strain-dependent fashion. Probably functions as a membrane-associated protein kinase that upon sensing the appropriate signal, autophosphorylates and in turn activates the cytosolic response regulator SaeR. The protein is Histidine protein kinase SaeS (saeS) of Staphylococcus aureus (strain bovine RF122 / ET3-1).